Here is a 177-residue protein sequence, read N- to C-terminus: Large ribosomal subunit protein uL5 (177 aa).

It belongs to the universal ribosomal protein uL5 family. As to quaternary structure, part of the 50S ribosomal subunit; part of the 5S rRNA/L5/L18/L25 subcomplex. Contacts the 5S rRNA and the P site tRNA. Forms a bridge to the 30S subunit in the 70S ribosome.

This is one of the proteins that bind and probably mediate the attachment of the 5S RNA into the large ribosomal subunit, where it forms part of the central protuberance. In the 70S ribosome it contacts protein S13 of the 30S subunit (bridge B1b), connecting the 2 subunits; this bridge is implicated in subunit movement. Contacts the P site tRNA; the 5S rRNA and some of its associated proteins might help stabilize positioning of ribosome-bound tRNAs. The sequence is that of Large ribosomal subunit protein uL5 from Ehrlichia canis (strain Jake).